Reading from the N-terminus, the 7071-residue chain is Replicase polyprotein 1ab (7071 aa).

In terms of domain architecture, CoV Nsp1 globular spans 12 to 127; that stretch reads THVQLSLPVL…YRNVLLRKNG (116 aa). Residues 148-179 enclose the BetaCoV Nsp1 C-terminal domain; the sequence is ELGTDPIEDYEQNWNTKHGSGVLRELTRELNG. The CoV Nsp2 N-terminal domain maps to 183–456; it reads TRYVDNNFCG…NEDLLEILSR (274 aa). Residues C200, C231, H234, H236, C323, C326, C341, C344, C370, C373, H382, and C416 each contribute to the Zn(2+) site. The tract at residues 200-236 is C2H2; it reads CIKDLLARAGKSMCTLSEQLDYIESKRGVYCCRDHGH. Positions 323-344 are C4; that stretch reads CNHCDEVSWQTCDFLKATCEQC. A C2HC region spans residues 370–416; sequence CPACQDPEIGPEHSAADYHNHSNIETRLRKGGRTRCFGGCVFAYVGC. The CoV Nsp2 middle domain maps to 458–688; sequence RVNINIVGDF…VDVVNKALEM (231 aa). The CoV Nsp2 C-terminal domain maps to 690-818; it reads IDQVTIAGAK…TNNVFRLKGG (129 aa). The Ubiquitin-like 1 domain maps to 822–930; the sequence is KGVTFGEDTV…MYCSFYPPDE (109 aa). Macro domains lie at 1001-1167, 1205-1333, and 1341-1468; these read VNQL…MDYL, KIKA…LPSE, and ILGT…TSSS. Residues 1470 to 1536 form the DPUP domain; that stretch reads TSEDHFVETV…PLDKLKSLLS (67 aa). Positions 1540-1595 constitute a Ubiquitin-like 2 domain; it reads VKTIKVFTTVDNTNLHTQLVDMSMTYGQQLGPTYLEGADVTKIKPHVNHEGKTFFV. One can recognise a Peptidase C16 domain in the interval 1609-1873; sequence YYHTLDESFL…YTEIEPKLDG (265 aa). C1649 (for PL-PRO activity) is an active-site residue. Positions 1727, 1730, 1762, and 1764 each coordinate Zn(2+). A C4-type zinc finger spans residues 1727-1764; the sequence is CKHCGQKTTTLTGVEAVMYMGTLSYDNLKMGVSIPCVC. Catalysis depends on for PL-PRO activity residues H1810 and D1824. The 111-residue stretch at 1886-1996 folds into the Nucleic acid-binding domain; sequence PIDLIPTQPL…CLWSTKPVDT (111 aa). The 110-residue stretch at 2021-2130 folds into the G2M domain; it reads PTPEEVVENP…LGQAAVTTSN (110 aa). The chain crosses the membrane as a helical span at residues 2201-2221; that stretch reads LFTIAMWLLLLSICLGSLIYV. Residues 2201–2369 form an HD1 region; it reads LFTIAMWLLL…IFFASFYYIW (169 aa). The 71-residue stretch at 2222 to 2292 folds into the 3Ecto domain; the sequence is TAALGVLLSN…QVTISSYKLD (71 aa). 2 disulfide bridges follow: C2238–C2266 and C2257–C2263. 2 helical membrane-spanning segments follow: residues 2312-2334 and 2349-2369; these read FFYL…SHFI and MAPV…YYIW. The segment at 2370–2460 is Y1; that stretch reads KSYVHIMDGC…QFKRPINPTD (91 aa). The CoV Nsp3 Y domain maps to 2370-2738; the sequence is KSYVHIMDGC…ITTKISLKGG (369 aa). 8 residues coordinate Zn(2+): H2374, C2379, C2384, C2387, C2420, H2423, C2427, and C2430. Residues 2374–2387 form a ZF1 region; it reads HIMDGCTSSTCMMC. A ZF2 region spans residues 2420–2430; that stretch reads CKTHNWNCLNC. The segment at 2461-2555 is Y2; it reads QSSYVVDSVA…LLDQALVSDV (95 aa). The interval 2461–2738 is coV-Y; that stretch reads QSSYVVDSVA…ITTKISLKGG (278 aa). The tract at residues 2556 to 2637 is Y3; it reads GDSTEVSVKM…ECLKLSHHSD (82 aa). The tract at residues 2638–2738 is Y4; that stretch reads LEVTGDSCNN…ITTKISLKGG (101 aa). Transmembrane regions (helical) follow at residues 2753-2773, 3020-3040, 3059-3079, 3081-3101, 3103-3123, and 3140-3160; these read LLCV…ILSV, ASVV…YYFM, LFLM…LPGV, SVFY…LAHL, WFAM…VFCI, and VVFN…TFLL. The segment at 2753 to 3160 is HD2; it reads LLCVLAALVC…EEAALCTFLL (408 aa). Positions 3140–3238 constitute a Nsp4C domain; that stretch reads VVFNGVTFST…QTSITSAVLQ (99 aa). Positions 3239–3544 constitute a Peptidase C30 domain; that stretch reads SGFRKMAFPS…VRQCSGVTFQ (306 aa). Residues H3279 and C3383 each act as for 3CL-PRO activity in the active site. A run of 7 helical transmembrane segments spans residues 3562–3582, 3584–3604, 3610–3630, 3657–3676, 3683–3702, 3726–3746, and 3754–3774; these read FLTS…FFVY, NAFL…MLLV, FLCL…MVYM, CVMY…RTVY, VWTL…GNAL, IMFL…LLFI, and IMLV…LFCL. The segment at 3562–3774 is HD3; that stretch reads FLTSLLILVQ…CCCYFGLFCL (213 aa). A RdRp Nsp7 cofactor domain is found at 3835-3917; that stretch reads SKMSDVKCTS…EMLDNRATLQ (83 aa). Residues 3918-4115 form the RdRp Nsp8 cofactor domain; sequence AIASEFSSLP…LRANSAVKLQ (198 aa). The 113-residue stretch at 4116–4228 folds into the Nsp9 ssRNA-binding domain; it reads NNELSPVALR…GSLAATVRLQ (113 aa). One can recognise an ExoN/MTase coactivator domain in the interval 4229 to 4367; the sequence is AGNATEVPAN…CDQLREPMMQ (139 aa). Zn(2+) is bound by residues C4302, C4305, H4311, C4318, C4345, C4348, C4356, and C4358. 2 zinc fingers span residues 4302–4318 and 4345–4358; these read CLYC…KGFC and CTVC…GCSC. The NiRAN domain maps to 4374-4628; the sequence is FLNRVCGVSA…AAESHMDADL (255 aa). Mn(2+) contacts are provided by N4576 and D4585. A Nsp12 Interface domain is found at 4633–4731; it reads IKWDLLKYDF…HNQDVNLHSS (99 aa). Residues H4662, C4668, C4673, C4677, and C4854 each coordinate Zn(2+). A Nsp12 RNA-dependent RNA polymerase domain is found at 4732 to 5299; the sequence is RLSFKELLVY…AMYTPHTVLQ (568 aa). Positions 4734–4948 are rdRp Fingers N-ter; the sequence is SFKELLVYAA…HQKLLKSIAA (215 aa). Positions 4949-4987 are rdRp Palm N-ter; sequence TRGATVVIGTSKFYGGWHNMLKTVYSDVETPHLMGWDYP. The RdRp catalytic domain occupies 4979–5141; sequence PHLMGWDYPK…CYNSNYAAQG (163 aa). The segment at 4988-5046 is rdRp Fingers C-ter; sequence KCDRAMPNMLRIMASLVLARKHSTCCNLSHRFYRLANECAQVLSEMVMCGGSLYVKPGG. Zn(2+) contacts are provided by H5009, C5012, and C5013. The rdRp Palm C-ter stretch occupies residues 5047–5182; the sequence is TSSGDATTAY…TKGPHEFCSQ (136 aa). Catalysis depends on residues S5126, D5127, and D5128. Residues 5183-5299 are rdRp Thumb; that stretch reads HTMLVKQGDD…AMYTPHTVLQ (117 aa). A CV ZBD domain is found at 5300-5412; that stretch reads AVGACVLCNS…TDFNAIATCD (113 aa). Residues C5304, C5307, C5315, C5318, C5325, C5328, H5332, H5338, C5349, C5354, C5371, and H5374 each coordinate Zn(2+). A (+)RNA virus helicase ATP-binding domain is found at 5556 to 5737; it reads NISDEFSSNV…MKTIGPDMFL (182 aa). An ATP-binding site is contributed by 5581 to 5588; that stretch reads GPPGTGKS. In terms of domain architecture, (+)RNA virus helicase C-terminal spans 5738 to 5907; the sequence is GTCRRCPAEI…TLQAENVTGL (170 aa). In terms of domain architecture, ExoN spans 5972 to 6187; sequence MFITREEAIR…RCLAVHECFV (216 aa). Catalysis depends on residues D5990, E5992, and E6091. Zn(2+)-binding residues include C6107, C6110, C6126, H6129, H6157, C6161, and H6164. Active-site residues include H6168 and D6173. C6179 lines the Zn(2+) pocket. The region spanning 6196 to 6427 is the N7-MTase domain; the sequence is YPIIGDELKI…NLWNTFTRLQ (232 aa). Residue 6231-6237 participates in S-adenosyl-L-methionine binding; the sequence is DIGNPKA. The gpppA-binding stretch occupies residues 6314–6328; that stretch reads CDGGSLYVNKHAFHT. Positions 6352, 6373, 6384, and 6387 each coordinate Zn(2+). Residues 6428–6488 enclose the Nsp15 N-terminal oligomerization domain; that stretch reads SLENVAYNVV…NVAFELWAKR (61 aa). One can recognise an AV-Nsp11N/CoV-Nsp15M domain in the interval 6489 to 6614; that stretch reads NIKSVPEIKI…YFKKVDGIIQ (126 aa). Residues 6631–6770 enclose the NendoU domain; it reads KPRSQMETDF…KDGHVETFYP (140 aa). Active-site residues include H6661, H6676, K6716, K6819, D6903, K6943, and E6976. In terms of domain architecture, Nidovirus-type SAM-dependent 2'-O-MTase spans 6775–7069; the sequence is SQAWQPGVAM…RVVVSSDILV (295 aa).

Belongs to the coronaviruses polyprotein 1ab family. As to quaternary structure, interacts with host PHB and PHB2. Interacts with papain-like protease nsp3 and non-structural protein 6. In terms of assembly, monomer. Homodimer. Only the homodimer shows catalytic activity. As to quaternary structure, interacts with nsp8 and nsp12 to form the replication-transcription complex (RTC): nsp12, nsp7, two subunits of nsp8, and up to two subunits of nsp13. Interacts with nsp7, nsp13 and nsp12 to form the replication-transcription complex (RTC): nsp12, nsp7, two subunits of nsp8, and up to two subunits of nsp13. In terms of assembly, interacts with nsp12. As to quaternary structure, interacts with proofreading exoribonuclease nsp14 and 2'-O-methyltransferase nsp16; these interactions enhance nsp14 and nsp16 enzymatic activities. Interacts with nsp7 and nsp8 to form the replication-transcription complex (RTC): nsp12, nsp7, two subunits of nsp8, and up to two subunits of nsp13. Interacts with nsp9. In terms of assembly, interacts with nsp8 to form the replication-transcription complex (RTC): nsp12, nsp7, two subunits of nsp8, and up to two subunits of nsp13. Requires Mn(2+) as cofactor. The cofactor is Mg(2+). Post-translationally, specific enzymatic cleavages in vivo by its own proteases yield mature proteins. 3CL-PRO and PL-PRO proteinases are autocatalytically processed.

It is found in the host membrane. Its subcellular location is the host cytoplasm. The protein resides in the host perinuclear region. It localises to the host endoplasmic reticulum-Golgi intermediate compartment. It catalyses the reaction RNA(n) + a ribonucleoside 5'-triphosphate = RNA(n+1) + diphosphate. It carries out the reaction ATP + H2O = ADP + phosphate + H(+). The enzyme catalyses Thiol-dependent hydrolysis of ester, thioester, amide, peptide and isopeptide bonds formed by the C-terminal Gly of ubiquitin (a 76-residue protein attached to proteins as an intracellular targeting signal).. The catalysed reaction is a 5'-end (N(7)-methyl 5'-triphosphoguanosine)-ribonucleoside in mRNA + S-adenosyl-L-methionine = a 5'-end (N(7)-methyl 5'-triphosphoguanosine)-(2'-O-methyl-ribonucleoside) in mRNA + S-adenosyl-L-homocysteine + H(+). It catalyses the reaction uridylyl-uridylyl-ribonucleotide-RNA = a 3'-end uridylyl-2',3'-cyclophospho-uridine-RNA + a 5'-end dephospho-ribonucleoside-RNA. It carries out the reaction a 5'-end diphospho-ribonucleoside in mRNA + GTP + H(+) = a 5'-end (5'-triphosphoguanosine)-ribonucleoside in mRNA + diphosphate. The enzyme catalyses a 5'-end (5'-triphosphoguanosine)-ribonucleoside in mRNA + S-adenosyl-L-methionine = a 5'-end (N(7)-methyl 5'-triphosphoguanosine)-ribonucleoside in mRNA + S-adenosyl-L-homocysteine. Functionally, the replicase polyprotein of coronaviruses is a multifunctional protein: it contains the activities necessary for the transcription of negative stranded RNA, leader RNA, subgenomic mRNAs and progeny virion RNA as well as proteinases responsible for the cleavage of the polyprotein into functional products. Inhibits host translation by interacting with the 40S ribosomal subunit. The nsp1-40S ribosome complex further induces an endonucleolytic cleavage near the 5'UTR of host mRNAs, targeting them for degradation. Viral mRNAs are not susceptible to nsp1-mediated endonucleolytic RNA cleavage thanks to the presence of a 5'-end leader sequence and are therefore protected from degradation. By suppressing host gene expression, nsp1 facilitates efficient viral gene expression in infected cells and evasion from host immune response. In terms of biological role, may play a role in the modulation of host cell survival signaling pathway by interacting with host PHB and PHB2. Indeed, these two proteins play a role in maintaining the functional integrity of the mitochondria and protecting cells from various stresses. Its function is as follows. Responsible for the cleavages located at the N-terminus of the replicase polyprotein. In addition, PL-PRO possesses a deubiquitinating/deISGylating activity and processes both 'Lys-48'- and 'Lys-63'-linked polyubiquitin chains from cellular substrates. Participates together with nsp4 in the assembly of virally-induced cytoplasmic double-membrane vesicles necessary for viral replication. Antagonizes innate immune induction of type I interferon by blocking the phosphorylation, dimerization and subsequent nuclear translocation of host IRF3. Also prevents host NF-kappa-B signaling. Functionally, participates in the assembly of virally-induced cytoplasmic double-membrane vesicles necessary for viral replication. Cleaves the C-terminus of replicase polyprotein at 11 sites. Recognizes substrates containing the core sequence [ILMVF]-Q-|-[SGACN]. Also able to bind an ADP-ribose-1''-phosphate (ADRP). In terms of biological role, plays a role in the initial induction of autophagosomes from host endoplasmic reticulum. Later, limits the expansion of these phagosomes that are no longer able to deliver viral components to lysosomes. Its function is as follows. Forms a hexadecamer with nsp8 (8 subunits of each) that may participate in viral replication by acting as a primase. Alternatively, may synthesize substantially longer products than oligonucleotide primers. Functionally, forms a hexadecamer with nsp7 (8 subunits of each) that may participate in viral replication by acting as a primase. Alternatively, may synthesize substantially longer products than oligonucleotide primers. Forms a primer, NSP9-pU, which is utilized by the polymerase for the initiation of RNA chains. Interacts with ribosome signal recognition particle RNA (SRP). Together with NSP8, suppress protein integration into the cell membrane, thereby disrupting host immune defenses. In terms of biological role, plays a pivotal role in viral transcription by stimulating both nsp14 3'-5' exoribonuclease and nsp16 2'-O-methyltransferase activities. Therefore plays an essential role in viral mRNAs cap methylation. Its function is as follows. RNA-directed RNA polymerase that catalyzes the transcription of viral genomic and subgenomic RNAs. Acts in complex with nsp7 and nsp8 to transcribe both the minus and positive strands of genomic RNA. The kinase-like NiRAN domain of NSP12 attaches one or more nucleotides to the amino terminus of NSP9, forming a covalent RNA-protein intermediate that serves as transcription/replication primer. Subgenomic RNAs (sgRNAs) are formed by discontinuous transcription: The polymerase has the ability to pause at transcription-regulating sequences (TRS) and jump to the leader TRS, resulting in a major deletion. This creates a series of subgenomic RNAs that are replicated, transcribed and translated. In addition, Nsp12 is a subunit of the viral RNA capping enzyme that catalyzes the RNA guanylyltransferase reaction for genomic and sub-genomic RNAs. Subsequently, the NiRAN domain transfers RNA to GDP, and forms the core cap structure GpppA-RNA. Functionally, multi-functional protein with a zinc-binding domain in N-terminus displaying RNA and DNA duplex-unwinding activities with 5' to 3' polarity. Activity of helicase is dependent on magnesium. Plays a role in viral RNA synthesis through two distinct activities. The N7-guanine methyltransferase activity plays a role in the formation of the cap structure GpppA-RNA. The proofreading exoribonuclease reduces the sensitivity of the virus to RNA mutagens during replication. This activity acts on both ssRNA and dsRNA in a 3'-5' direction. In terms of biological role, plays a role in viral transcription/replication and prevents the simultaneous activation of host cell dsRNA sensors, such as MDA5/IFIH1, OAS, and PKR. Acts by degrading the 5'-polyuridines generated during replication of the poly(A) region of viral genomic and subgenomic RNAs. Catalyzes a two-step reaction in which a 2'3'-cyclic phosphate (2'3'-cP) is first generated by 2'-O transesterification, which is then hydrolyzed to a 3'-phosphate (3'-P). If not degraded, poly(U) RNA would hybridize with poly(A) RNA tails and activate host dsRNA sensors. Its function is as follows. Methyltransferase that mediates mRNA cap 2'-O-ribose methylation to the 5'-cap structure of viral mRNAs. N7-methyl guanosine cap is a prerequisite for binding of nsp16. Therefore plays an essential role in viral mRNAs cap methylation which is essential to evade immune system. The polypeptide is Replicase polyprotein 1ab (rep) (Rhinolophus ferrumequinum (Greater horseshoe bat)).